A 359-amino-acid chain; its full sequence is Peptide chain release factor 1 (359 aa).

An N5-methylglutamine modification is found at Q235. The tract at residues Q283 to Y309 is disordered.

The protein belongs to the prokaryotic/mitochondrial release factor family. In terms of processing, methylated by PrmC. Methylation increases the termination efficiency of RF1.

Its subcellular location is the cytoplasm. In terms of biological role, peptide chain release factor 1 directs the termination of translation in response to the peptide chain termination codons UAG and UAA. The polypeptide is Peptide chain release factor 1 (Brucella abortus (strain S19)).